We begin with the raw amino-acid sequence, 314 residues long: Oxaloacetate tautomerase FAHD2A, mitochondrial (314 aa).

A mitochondrion-targeting transit peptide spans 1–84; it reads MLVSGRRRLL…ATLSVARRAL (84 aa). 3 residues coordinate Mg(2+): E159, E161, and D190.

This sequence belongs to the FAH family. It depends on Mg(2+) as a cofactor. Mn(2+) serves as cofactor.

It is found in the mitochondrion. It catalyses the reaction oxaloacetate = enol-oxaloacetate. In terms of biological role, tautomerase that converts enol-oxaloacetate, a strong inhibitor of succinate dehydrogenase, to the physiological keto form of oxaloacetate. It is thereby required to maximize aerobic respiration efficiency by preventing succinate dehydrogenase inhibition. In Homo sapiens (Human), this protein is Oxaloacetate tautomerase FAHD2A, mitochondrial.